The primary structure comprises 369 residues: Probable L-tyrosine/L-aspartate decarboxylase (369 aa).

Lys224 carries the N6-(pyridoxal phosphate)lysine modification.

The protein belongs to the group II decarboxylase family. MfnA subfamily. Pyridoxal 5'-phosphate is required as a cofactor.

It carries out the reaction L-tyrosine + H(+) = tyramine + CO2. It catalyses the reaction L-aspartate + H(+) = beta-alanine + CO2. It participates in cofactor biosynthesis; methanofuran biosynthesis. Its pathway is cofactor biosynthesis; coenzyme A biosynthesis. In terms of biological role, catalyzes the decarboxylation of L-tyrosine to produce tyramine for methanofuran biosynthesis. Can also catalyze the decarboxylation of L-aspartate to produce beta-alanine for coenzyme A (CoA) biosynthesis. This chain is Probable L-tyrosine/L-aspartate decarboxylase, found in Methanospirillum hungatei JF-1 (strain ATCC 27890 / DSM 864 / NBRC 100397 / JF-1).